The sequence spans 502 residues: MKEPTTEIEIETSAVATILPPPLPPTASPHQALVERLKDYGQEDVFSLWDELSPEERDLLLRDIENLDLPRIDRIIRCSLHSQGLPVAAIEPVPENCVSTVEERTKEDREKWWKMGLKAIYEGKLGVVLLSGGQGTRLGSSDPKGCYNIGLPSGKSLFQIQAERILCVQRLASQAMSEASPTRPVTIQWYIMTSPFTHEPTQKFFKSHKYFGLEPDQVTFFQQGTLPCISKDGKFIMETPFSLSKAPDGNGGVYTALKSSRLLEDMASRGIKYVDCYGVDNVLVRVADPTFLGYFIDKSAASAAKVVRKAYPQEKVGVFVRRGKGGPLTVVEYTELDQSMASATNQQTGRLQYCWSNVCLHMFTLDFLNQVANGLEKDSVYHLAEKKIPSINGDIVGLKLEQFIFDCFPYAPSTALFEVLREEEFAPVKNANGSNYDTPESARLLVLRLHTRWVIAAGGFLTHSVPLYATGVEVSPLCSYAGENLEAICRGRTFHAPCEISL.

The short motif at 130–133 is the Substrate binding element; sequence LSGG. Asn-250 is a substrate binding site. Positions 332-333 match the Substrate binding motif; it reads EY. Position 429 (Lys-429) interacts with substrate.

This sequence belongs to the UDPGP type 1 family. As to quaternary structure, monomer. It depends on Mg(2+) as a cofactor. The cofactor is Mn(2+). Expressed in root tips, stipules, lateral root primordia, immature anthers and at the branching points of the flowering shoots.

It localises to the cytoplasm. The enzyme catalyses N-acetyl-alpha-D-glucosamine 1-phosphate + UTP + H(+) = UDP-N-acetyl-alpha-D-glucosamine + diphosphate. It catalyses the reaction N-acetyl-alpha-D-galactosamine 1-phosphate + UTP + H(+) = UDP-N-acetyl-alpha-D-galactosamine + diphosphate. The catalysed reaction is alpha-D-glucose 1-phosphate + UTP + H(+) = UDP-alpha-D-glucose + diphosphate. The protein operates within nucleotide-sugar biosynthesis; UDP-N-acetyl-alpha-D-glucosamine biosynthesis; UDP-N-acetyl-alpha-D-glucosamine from N-acetyl-alpha-D-glucosamine 1-phosphate: step 1/1. Functionally, uridylyltransferase involved in the biosynthesis of UDP-glucosamine, an essential precursor for glycoprotein and glycolipid synthesis. Can use UDP-glucosamine, the 4-epimer UDP-galactosamine and UDP-glucose as substrates. Acts redundantly with GLCNAC1PUT1. Required for gametogenesis and embryo development. The protein is UDP-N-acetylglucosamine diphosphorylase 2 (GLCNAC1PUT2) of Arabidopsis thaliana (Mouse-ear cress).